Here is a 473-residue protein sequence, read N- to C-terminus: Sulfhydrylase-like protein lolC2 (473 aa).

N6-(pyridoxal phosphate)lysine is present on Lys-226.

The protein belongs to the trans-sulfuration enzymes family. Pyridoxal 5'-phosphate serves as cofactor.

Its pathway is alkaloid biosynthesis. In terms of biological role, sulfhydrylase-like protein; part of the gene cluster that mediates the biosynthesis of loline alkaloids, potent insecticidal agents composed of a pyrrolizidine ring system and an uncommon ether bridge linking carbons 2 and 7. Lolines are structurally differentiated by the various modifications of the L-amino group and include norloline, loline, N-methylloline, N-acetylloline, N-acetylnorloline, and N-formylloline. The first committed step is the condensation of O-acetyl-L-homoserine (derived from L-aspartic acid) and L-proline, probably catalyzed by the gamma-type pyridoxal 5'-phosphate(PLP)-dependent enzyme lolC, to give the diamino diacid, NACPP. Ensuing cyclization, decarboxylation, and acetylation steps yield 1-exo-acetamidopyrrolizidine (AcAP). LolO is required for installation of the ether bridge upon the pathway intermediate, 1-exo-acetamidopyrrolizidine (AcAP). In sequential 2-oxoglutarate- and O(2)-consuming steps, lolO removes hydrogens from C2 and C7 of AcAP to form both carbon-oxygen bonds in N-acetylnorloline (NANL), the precursor to all other lolines. The enzymes lolD, lolE, lolF and lolT have also been proposed to be involved in the ether-bridge installation. Further processing of the exocyclic moiety of NANL by fungal N-acetamidase (LolN), methyltransferase (LolM), and cytochrome P450 (LolP) enzymes, with occasional involvement of a plant acetyltransferase, generates the other known lolines. LolN transforms NANL to norlonine which is monomethylated and dimethylated to respectively lonine and N-methyllonine (NML) by lolM. LolP catalyzes hydroxylation of the methyl group in N-methylloline (NML) and further oxygenation to N-formylloline (NFL). A plant acetyltransferase is responsible for the acetylation of loline to form N-acetylloline (NAL). LolA might interact with aspartate kinase to prevent feedback inhibition of its activity by these end products and thereby promote production of L-homoserine from L-aspartate. In Epichloe uncinata (Endophyte fungus), this protein is Sulfhydrylase-like protein lolC2.